The sequence spans 337 residues: DNA-directed RNA polymerase subunit alpha (337 aa).

The segment at 1–233 (MVREKVTVST…DLFIPFLHAQ (233 aa)) is alpha N-terminal domain (alpha-NTD). Residues 267–337 (IALKYIFIDQ…FTVDLPKNKF (71 aa)) are alpha C-terminal domain (alpha-CTD).

Belongs to the RNA polymerase alpha chain family. In plastids the minimal PEP RNA polymerase catalytic core is composed of four subunits: alpha, beta, beta', and beta''. When a (nuclear-encoded) sigma factor is associated with the core the holoenzyme is formed, which can initiate transcription.

The protein localises to the plastid. The protein resides in the chloroplast. It carries out the reaction RNA(n) + a ribonucleoside 5'-triphosphate = RNA(n+1) + diphosphate. In terms of biological role, DNA-dependent RNA polymerase catalyzes the transcription of DNA into RNA using the four ribonucleoside triphosphates as substrates. This is DNA-directed RNA polymerase subunit alpha from Platanus occidentalis (Sycamore).